Here is a 188-residue protein sequence, read N- to C-terminus: FMN-dependent NADPH-azoreductase (188 aa).

The protein belongs to the azoreductase type 2 family. As to quaternary structure, homotetramer. Requires FMN as cofactor.

In terms of biological role, catalyzes the reductive cleavage of azo bond in aromatic azo compounds to the corresponding amines. Requires NADPH, but not NADH, as an electron donor for its activity. The polypeptide is FMN-dependent NADPH-azoreductase (azo1) (Staphylococcus epidermidis (strain ATCC 12228 / FDA PCI 1200)).